The chain runs to 212 residues: Peptide methionine sulfoxide reductase MsrA (212 aa).

The active site involves Cys52.

Belongs to the MsrA Met sulfoxide reductase family.

The catalysed reaction is L-methionyl-[protein] + [thioredoxin]-disulfide + H2O = L-methionyl-(S)-S-oxide-[protein] + [thioredoxin]-dithiol. It catalyses the reaction [thioredoxin]-disulfide + L-methionine + H2O = L-methionine (S)-S-oxide + [thioredoxin]-dithiol. In terms of biological role, has an important function as a repair enzyme for proteins that have been inactivated by oxidation. Catalyzes the reversible oxidation-reduction of methionine sulfoxide in proteins to methionine. The polypeptide is Peptide methionine sulfoxide reductase MsrA (Escherichia coli O17:K52:H18 (strain UMN026 / ExPEC)).